The chain runs to 314 residues: Very long chain fatty acid elongase 4 (314 aa).

Asparagine 20 is a glycosylation site (N-linked (GlcNAc...) asparagine). A run of 7 helical transmembrane segments spans residues 42 to 62 (LMQSPWPTLSISTLYLLFVWL), 78 to 98 (VLIIYNFGMVLLNLFIFRELF), 127 to 147 (ALWWYFVSKGVEYLDTVFFIL), 165 to 185 (MFTLWWIGIKWVAGGQAFFGA), 188 to 208 (NSFIHVIMYSYYGLTAFGPWI), 217 to 237 (YLTMLQLIQFHVTIGHTALSL), and 247 to 267 (MHWALIAYAISFIFLFLNFYI). The tract at residues 275-314 (KPKAGKTAMNGISANGVSKSEKQLMIENGKKQKNGKAKGD) is disordered. Over residues 293–304 (KSEKQLMIENGK) the composition is skewed to basic and acidic residues. Residues 305 to 314 (KQKNGKAKGD) show a composition bias toward basic residues. The Di-lysine motif signature appears at 310–314 (KAKGD).

The protein belongs to the ELO family. ELOVL4 subfamily. Oligomer. In terms of processing, N-glycosylated. In terms of tissue distribution, expressed in the retina and at much lower level in the brain. Ubiquitous, highest expression in thymus, followed by testis, small intestine, ovary, and prostate. Little or no expression in heart, lung, liver, or leukocates.

It localises to the endoplasmic reticulum membrane. It catalyses the reaction a very-long-chain acyl-CoA + malonyl-CoA + H(+) = a very-long-chain 3-oxoacyl-CoA + CO2 + CoA. It carries out the reaction tetracosanoyl-CoA + malonyl-CoA + H(+) = 3-oxohexacosanoyl-CoA + CO2 + CoA. The enzyme catalyses hexacosanoyl-CoA + malonyl-CoA + H(+) = 3-oxooctacosanyol-CoA + CO2 + CoA. The catalysed reaction is octacosanoyl-CoA + malonyl-CoA + H(+) = 3-oxo-triacontanoyl-CoA + CO2 + CoA. It catalyses the reaction triacontanoyl-CoA + malonyl-CoA + H(+) = 3-oxo-dotriacontanoyl-CoA + CO2 + CoA. It carries out the reaction (19Z,22Z,25Z,28Z,31Z)-tetratriacontapentaenoyl-CoA + malonyl-CoA + H(+) = 3-oxo-(21Z,24Z,27Z,30Z,33Z)-hexatriacontapentaenoyl-CoA + CO2 + CoA. The enzyme catalyses (4Z,7Z,10Z,13Z,16Z,19Z)-docosahexaenoyl-CoA + malonyl-CoA + H(+) = 3-oxo-(6Z,9Z,12Z,15Z,18Z,21Z)-tetracosahexaenoyl-CoA + CO2 + CoA. The catalysed reaction is (7Z,10Z,13Z,16Z)-docosatetraenoyl-CoA + malonyl-CoA + H(+) = (9Z,12Z,15Z,18Z)-3-oxotetracosatetraenoyl-CoA + CO2 + CoA. It catalyses the reaction (11Z,14Z,17Z,20Z,23Z)-hexacosapentaenoyl-CoA + malonyl-CoA + H(+) = 3-oxo-(13Z,16Z,19Z,22Z,25Z)-octacosapentaenoyl-CoA + CO2 + CoA. It carries out the reaction (13Z,16Z,19Z,22Z,25Z)-octacosapentaenoyl-CoA + malonyl-CoA + H(+) = 3-oxo-(15Z,18Z,21Z,24Z,27Z)-triacontapentaenoyl-CoA + CO2 + CoA. The enzyme catalyses (15Z,18Z,21Z,24Z,27Z)-triacontapentaenoyl-CoA + malonyl-CoA + H(+) = 3-oxo-(17Z,20Z,23Z,26Z,29Z)-dotriacontapentaenoyl-CoA + CO2 + CoA. The catalysed reaction is (17Z,20Z,23Z,26Z,29Z)-dotriacontapentaenoyl-CoA + malonyl-CoA + H(+) = 3-oxo-(19Z,22Z,25Z,28Z,31Z)-tetratriacontapentaenoyl-CoA + CO2 + CoA. It catalyses the reaction (21Z,24Z,27Z,30Z,33Z)-hexatriacontapentaenoyl-CoA + malonyl-CoA + H(+) = 3-oxo-(23Z,26Z,29Z,32Z,35Z)-octatriacontapentaenoyl-CoA + CO2 + CoA. It carries out the reaction (11Z,14Z,17Z,20Z)-hexacosatetraenoyl-CoA + malonyl-CoA + H(+) = (13Z,16Z,19Z,22Z)-3-oxooctacosatetraenoyl-CoA + CO2 + CoA. The enzyme catalyses (13Z,16Z,19Z,22Z)-octacosatetraenoyl-CoA + malonyl-CoA + H(+) = 3-oxo-(15Z,18Z,21Z,24Z)-triacontatetraenoyl-CoA + CO2 + CoA. The catalysed reaction is (15Z,18Z,21Z,24Z)-triacontatetraenoyl-CoA + malonyl-CoA + H(+) = 3-oxo-(17Z,20Z,23Z,26Z)-dotriacontatetraenoyl-CoA + CO2 + CoA. It catalyses the reaction (17Z,20Z,23Z,26Z)-dotriacontatetraenoyl-CoA + malonyl-CoA + H(+) = 3-oxo-(19Z,22Z,25Z,28Z)-tetratriacontatetraenoyl-CoA + CO2 + CoA. It carries out the reaction (19Z,22Z,25Z,28Z)-tetratriacontatetraenoyl-CoA + malonyl-CoA + H(+) = 3-oxo-(21Z,24Z,27Z,30Z)-hexatriacontatetraenoyl-CoA + CO2 + CoA. The enzyme catalyses (21Z,24Z,27Z,30Z)-hexatriacontatetraenoyl-CoA + malonyl-CoA + H(+) = 3-oxo-(23Z,26Z,29Z,32Z)-octatriacontatetraenoyl-CoA + CO2 + CoA. The catalysed reaction is (6Z,9Z,12Z,15Z,18Z,21Z)-tetracosahexaenoyl-CoA + malonyl-CoA + H(+) = 3-oxo-(8Z,11Z,14Z,17Z,20Z,23Z)-hexacosahexaenoyl-CoA + CO2 + CoA. It catalyses the reaction (8Z,11Z,14Z,17Z,20Z,23Z)-hexacosahexaenoyl-CoA + malonyl-CoA + H(+) = 3-oxo-(10Z,13Z,16Z,19Z,22Z,25Z)-octacosahexaenoyl-CoA + CO2 + CoA. It carries out the reaction (10Z,13Z,16Z,19Z,22Z,25Z)-octacosahexaenoyl-CoA + malonyl-CoA + H(+) = 3-oxo-(12Z,15Z,18Z,21Z,24Z,27Z)-triacontahexaenoyl-CoA + CO2 + CoA. The enzyme catalyses (12Z,15Z,18Z,21Z,24Z,27Z)-triacontahexaenoyl-CoA + malonyl-CoA + H(+) = 3-oxo-(14Z,17Z,20Z,23Z,26Z,29Z)-dotriacontahexaenoyl-CoA + CO2 + CoA. The catalysed reaction is (14Z,17Z,20Z,23Z,26Z,29Z)-dotriacontahexaenoyl-CoA + malonyl-CoA + H(+) = 3-oxo-(16Z,19Z,22Z,25Z,28Z,31Z)-tetratriacontahexaenoyl-CoA + CO2 + CoA. It catalyses the reaction (16Z,19Z,22Z,25Z,28Z,31Z)-tetratriacontahexaenoyl-CoA + malonyl-CoA + H(+) = 3-oxo-(18Z,21Z,24Z,27Z,30Z,33Z)-hexatriacontahexaenoyl-CoA + CO2 + CoA. It carries out the reaction (9Z,12Z,15Z,18Z,21Z)-tetracosapentaenoyl-CoA + malonyl-CoA + H(+) = 3-oxo-(11Z,14Z,17Z,20Z,23Z)-hexacosapentaenoyl-CoA + CO2 + CoA. The protein operates within lipid metabolism; fatty acid biosynthesis. Functionally, catalyzes the first and rate-limiting reaction of the four reactions that constitute the long-chain fatty acids elongation cycle. This endoplasmic reticulum-bound enzymatic process allows the addition of 2 carbons to the chain of long- and very long-chain fatty acids (VLCFAs) per cycle. Condensing enzyme that catalyzes the synthesis of very long chain saturated (VLC-SFA) and polyunsaturated (PUFA) fatty acids that are involved in multiple biological processes as precursors of membrane lipids and lipid mediators. May play a critical role in early brain and skin development. The protein is Very long chain fatty acid elongase 4 of Homo sapiens (Human).